The sequence spans 182 residues: Bifunctional protein PyrR (182 aa).

The PRPP-binding signature appears at 99 to 111 (VILVDDVLYTGRT).

This sequence belongs to the purine/pyrimidine phosphoribosyltransferase family. PyrR subfamily. Homodimer and homohexamer; in equilibrium.

The catalysed reaction is UMP + diphosphate = 5-phospho-alpha-D-ribose 1-diphosphate + uracil. Regulates transcriptional attenuation of the pyrimidine nucleotide (pyr) operon by binding in a uridine-dependent manner to specific sites on pyr mRNA. This disrupts an antiterminator hairpin in the RNA and favors formation of a downstream transcription terminator, leading to a reduced expression of downstream genes. In terms of biological role, also displays a weak uracil phosphoribosyltransferase activity which is not physiologically significant. The sequence is that of Bifunctional protein PyrR from Alkaliphilus metalliredigens (strain QYMF).